A 477-amino-acid chain; its full sequence is P3 protein (477 aa).

A disordered region spans residues 1–21 (MVLMQDKGSSQQWPGLGGEGG). The next 8 helical transmembrane spans lie at 225-245 (PMLLGLLGQFLVMPLYAFLMA), 253-273 (ALALGLIITCSSPGGGGSYLF), 281-301 (VTLAISMTFLSTVAATGFLPL), 320-340 (ISKILGTLLFIAIPIAVGVLI), 361-381 (VLLLGGLFLAYRMGVFILAGI), 383-403 (LPIVLVGITVPLVGLLVGYCL), 417-437 (VSIEVGVQNSLLALAMLQLSL), and 450-470 (FIVALSGTSEMLALVIGHFIY).

The protein belongs to the bile acid:sodium symporter (BASS) (TC 2.A.28) family.

The protein resides in the membrane. The ubiquitous expression and the conservation of the sequence in distant animal species suggest that the gene codes for a protein with housekeeping functions. This is P3 protein (SLC10A3) from Homo sapiens (Human).